Here is a 479-residue protein sequence, read N- to C-terminus: Kynurenine 3-monooxygenase (479 aa).

Belongs to the aromatic-ring hydroxylase family. KMO subfamily. Requires FAD as cofactor.

It localises to the mitochondrion outer membrane. It carries out the reaction L-kynurenine + NADPH + O2 + H(+) = 3-hydroxy-L-kynurenine + NADP(+) + H2O. It functions in the pathway cofactor biosynthesis; NAD(+) biosynthesis; quinolinate from L-kynurenine: step 1/3. Catalyzes the hydroxylation of L-kynurenine (L-Kyn) to form 3-hydroxy-L-kynurenine (L-3OHKyn). Required for synthesis of quinolinic acid. This Chaetomium globosum (strain ATCC 6205 / CBS 148.51 / DSM 1962 / NBRC 6347 / NRRL 1970) (Soil fungus) protein is Kynurenine 3-monooxygenase.